We begin with the raw amino-acid sequence, 141 residues long: uncharacterized protein (141 aa).

This is an uncharacterized protein from Homo sapiens (Human).